The sequence spans 373 residues: Bilirubin reductase (373 aa).

Residue glutamine 92 participates in FMN binding. The active-site Proton donor is arginine 168. Residue lysine 215 participates in FMN binding. [4Fe-4S] cluster-binding residues include cysteine 344, cysteine 347, cysteine 351, and cysteine 363.

It belongs to the NADH:flavin oxidoreductase/NADH oxidase family. FMN serves as cofactor. The cofactor is [4Fe-4S] cluster.

The catalysed reaction is urobilinogen + 4 A = (4Z,15Z)-bilirubin IXalpha + 4 AH2. The enzyme catalyses urobilinogen + 2 A = (4Z,15Z)-mesobilirubin IXalpha + 2 AH2. It functions in the pathway porphyrin-containing compound metabolism; protoheme degradation. Its function is as follows. Bilirubin reductase that catalyzes reduction of mesobilirubin and/or bilirubin to urobilinogen, a key step during heme degradation. Cooperates with BilS, which is probably involved in electron transfer for BilR. Urobilinogen then spontaneously degrades into urobilin, which gives urine its distinctive yellow color. This is Bilirubin reductase from Clostridium symbiosum (strain WAL-14163).